A 665-amino-acid chain; its full sequence is ELMO family protein LMO1 (665 aa).

Forms an active heterodimer with DCK1.

The protein localises to the cytoplasm. It is found in the mitochondrion. In terms of biological role, forms a transiant heterodimeric complex with DCK1, that acts as a guanine nucleotide exchange factor (GEF) for the small GTPase RHO5. DCK1, LMO1 and RHO5 relocate to mitochondria upon oxidative stress and trigger cell death. The DCK1/LMO1/RHO5 signaling module mediates mitochondrial turnover under nitrogen starvation conditions via mitophagy. The DCK1/LMO1/RHO5 signaling module also plays a role in cell wall integrity signaling. This is ELMO family protein LMO1 from Saccharomyces cerevisiae (strain ATCC 204508 / S288c) (Baker's yeast).